Consider the following 189-residue polypeptide: Leucine repeat adapter protein 25 (189 aa).

S28 carries the post-translational modification Phosphoserine. Residues 54–83 (ELSRAARAPDGPRHAAGAANAGPAAGPRRP) form a disordered region. Low complexity predominate over residues 67–83 (HAAGAANAGPAAGPRRP). An LRR repeat occupies 86-114 (LDSALAALRKEMVGLRQLDMSLLCQLWGL). A disordered region spans residues 141 to 175 (DSSYPPDAGLSDDEEPPDASLPPDPPPLTVPQTHN). The span at 159-169 (ASLPPDPPPLT) shows a compositional bias: pro residues. Phosphoserine is present on S188.

It belongs to the FAM89 family. As to quaternary structure, interacts with SKI. Interacts (via LRR repeat) with CDC42BPA (via AGC-kinase C-terminal domain), CDC42BPB (via AGC-kinase C-terminal domain) and LIMK1 (via LIM zinc-binding domains). Forms a tripartite complex with CDC42BPA, CDC42BPB and LIMK1.

The protein resides in the cytoplasm. Its subcellular location is the cell projection. The protein localises to the lamellipodium. In terms of biological role, negatively regulates TGF-beta-induced signaling; in cooperation with SKI prevents the translocation of SMAD2 from the nucleus to the cytoplasm in response to TGF-beta. Acts as an adapter that mediates the specific recognition of LIMK1 by CDC42BPA and CDC42BPB in the lamellipodia. LRAP25-mediated CDC42BPA/CDC42BPB targeting to LIMK1 and the lamellipodium results in LIMK1 activation and the subsequent phosphorylation of CFL1 which is important for lamellipodial F-actin regulation. This chain is Leucine repeat adapter protein 25 (FAM89B), found in Homo sapiens (Human).